We begin with the raw amino-acid sequence, 392 residues long: Phosphoglycerate kinase (392 aa).

Substrate-binding positions include 21–23 (DLN), R36, 59–62 (HLGR), R113, and R146. ATP contacts are provided by residues K197, E319, and 345 to 348 (GGDT).

It belongs to the phosphoglycerate kinase family. Monomer.

The protein resides in the cytoplasm. It catalyses the reaction (2R)-3-phosphoglycerate + ATP = (2R)-3-phospho-glyceroyl phosphate + ADP. The protein operates within carbohydrate degradation; glycolysis; pyruvate from D-glyceraldehyde 3-phosphate: step 2/5. This chain is Phosphoglycerate kinase, found in Thioalkalivibrio sulfidiphilus (strain HL-EbGR7).